A 62-amino-acid chain; its full sequence is Conotoxin Lt5.8 (62 aa).

Residues 1–19 (MLCLPVFIILLLLVSPAAT) form the signal peptide. Positions 20–47 (MPVDLEILKAPTKESRKDFEMRIELLRS) are excised as a propeptide. A Pyrrolidone carboxylic acid modification is found at glutamine 50. A Glutamine amide modification is found at glutamine 61.

It belongs to the conotoxin T superfamily. Post-translationally, contains 2 disulfide bonds that can be either 'C1-C3, C2-C4' or 'C1-C4, C2-C3', since these disulfide connectivities have been observed for conotoxins with cysteine framework V (for examples, see AC P0DQQ7 and AC P81755). In terms of tissue distribution, expressed by the venom duct.

Its subcellular location is the secreted. In Conus litteratus (Lettered cone), this protein is Conotoxin Lt5.8.